The sequence spans 235 residues: Uridylate kinase (235 aa).

8–11 lines the ATP pocket; it reads KFSG. The tract at residues 16–21 is involved in allosteric activation by GTP; the sequence is GKEGYG. Residue Gly50 participates in UMP binding. Residues Gly51 and Arg55 each contribute to the ATP site. Residues Asp71 and 132–139 each bind UMP; that span reads TGNPYFTT. The ATP site is built by Thr159, Tyr165, and Asp168.

Belongs to the UMP kinase family. As to quaternary structure, homohexamer.

It localises to the cytoplasm. The catalysed reaction is UMP + ATP = UDP + ADP. It functions in the pathway pyrimidine metabolism; CTP biosynthesis via de novo pathway; UDP from UMP (UMPK route): step 1/1. With respect to regulation, allosterically activated by GTP. Inhibited by UTP. Catalyzes the reversible phosphorylation of UMP to UDP. In Sulfurovum sp. (strain NBC37-1), this protein is Uridylate kinase.